Reading from the N-terminus, the 60-residue chain is Large ribosomal subunit protein bL32 (60 aa).

Residues 1 to 60 (MAVQQNKKSRSARDMRRSHDALEPNALSVEKSTGEVHLRHHVSPDGFYRGRKVIDKGADE) are disordered. Basic and acidic residues predominate over residues 11–22 (SARDMRRSHDAL).

The protein belongs to the bacterial ribosomal protein bL32 family.

In Stutzerimonas stutzeri (strain A1501) (Pseudomonas stutzeri), this protein is Large ribosomal subunit protein bL32.